Consider the following 313-residue polypeptide: Methionyl-tRNA formyltransferase (313 aa).

109–112 (SLLP) contacts (6S)-5,6,7,8-tetrahydrofolate.

Belongs to the Fmt family.

It carries out the reaction L-methionyl-tRNA(fMet) + (6R)-10-formyltetrahydrofolate = N-formyl-L-methionyl-tRNA(fMet) + (6S)-5,6,7,8-tetrahydrofolate + H(+). Its function is as follows. Attaches a formyl group to the free amino group of methionyl-tRNA(fMet). The formyl group appears to play a dual role in the initiator identity of N-formylmethionyl-tRNA by promoting its recognition by IF2 and preventing the misappropriation of this tRNA by the elongation apparatus. This is Methionyl-tRNA formyltransferase from Thermotoga neapolitana (strain ATCC 49049 / DSM 4359 / NBRC 107923 / NS-E).